A 623-amino-acid polypeptide reads, in one-letter code: V-type proton ATPase catalytic subunit A (623 aa).

ATP is bound at residue 252 to 259 (GAFGCGKT).

The protein belongs to the ATPase alpha/beta chains family. In terms of assembly, V-ATPase is a heteromultimeric enzyme composed of a peripheral catalytic V1 complex (main components: subunits A, B, C, D, E, and F) attached to an integral membrane V0 proton pore complex (main component: the proteolipid protein).

The catalysed reaction is ATP + H2O + 4 H(+)(in) = ADP + phosphate + 5 H(+)(out). Catalytic subunit of the peripheral V1 complex of vacuolar ATPase. V-ATPase vacuolar ATPase is responsible for acidifying a variety of intracellular compartments in eukaryotic cells. In Gossypium hirsutum (Upland cotton), this protein is V-type proton ATPase catalytic subunit A (CVA69.24).